Here is a 179-residue protein sequence, read N- to C-terminus: uncharacterized protein (179 aa).

Composition is skewed to polar residues over residues 1–37 (PLGAATSNIPPQYARSTLQPTGLTSRAQSYPTNTNPG) and 60–70 (IPTQSTTTFRS). Disordered stretches follow at residues 1 to 41 (PLGA…PSAK) and 60 to 82 (IPTQSTTTFRSNPPLPPVVPGRR).

Component of the acid-soluble and acid-insoluble organic matrix of calcified shell layers (at protein level).

The protein localises to the secreted. This is an uncharacterized protein from Haliotis asinina (Donkey's ear abalone).